Reading from the N-terminus, the 364-residue chain is MSGLFETLGRRALFTFDAEQAHGLSITGLKTGIVTCRTPEDPALSVKVAGLKFPNPLGMAAGYDKNAEVPDALLKLGFGFAEVGTLTPRPQSGNPRPRIFRLVDDKAVINRLGFNNEGHEAAFKRLSRRAGKSGIVGVNIGANKDAEDRIADYVAGIRRFYQLARYFTVNISSPNTPGLRNLQAREALHELLSRVLEARDEEGNMCTLKRPVFLKIAPDLTDEELDDIAAEADAQKLDGIIVSNTTLSRSGLKNPENSNETGGLSGAPLFERSTVVLARMRERVGPDMPLIGVGGIDSAETALAKIKAGADLVQLYTGLIYRGPGLPGEILRGLSTAIKHEGVSSIAELRDRDTKEWAARKLIS.

FMN is bound by residues 61-65 (AGYDK) and T85. K65 is a binding site for substrate. 110–114 (NRLGF) is a substrate binding site. FMN is bound by residues N139 and N170. N170 lines the substrate pocket. The active-site Nucleophile is S173. Residue N175 coordinates substrate. FMN-binding residues include K215 and S243. Position 244–245 (244–245 (NT)) interacts with substrate. FMN is bound by residues G266, G295, and 316-317 (YT).

This sequence belongs to the dihydroorotate dehydrogenase family. Type 2 subfamily. In terms of assembly, monomer. It depends on FMN as a cofactor.

It localises to the cell membrane. The catalysed reaction is (S)-dihydroorotate + a quinone = orotate + a quinol. It participates in pyrimidine metabolism; UMP biosynthesis via de novo pathway; orotate from (S)-dihydroorotate (quinone route): step 1/1. In terms of biological role, catalyzes the conversion of dihydroorotate to orotate with quinone as electron acceptor. The sequence is that of Dihydroorotate dehydrogenase (quinone) from Brucella canis (strain ATCC 23365 / NCTC 10854 / RM-666).